Here is a 735-residue protein sequence, read N- to C-terminus: Ribosomal protein S6 kinase alpha-1 (735 aa).

Ser54 is modified (phosphoserine). The Protein kinase 1 domain maps to Phe62–Tyr321. Residues Leu68–Val76 and Lys94 contribute to the ATP site. Asp187 acts as the Proton acceptor in catalysis. At Ser221 the chain carries Phosphoserine; by PDPK1. Ser307 is modified (phosphoserine). The AGC-kinase C-terminal domain maps to Ser322–Gly391. The residue at position 359 (Thr359) is a Phosphothreonine. Phosphoserine is present on residues Ser363 and Ser369. Ser380 carries the post-translational modification Phosphoserine; by autocatalysis. A Protein kinase 2 domain is found at Tyr418–Val675. Residues Ile424 to Cys432 and Lys447 contribute to the ATP site. Catalysis depends on Asp535, which acts as the Proton acceptor. At Thr573 the chain carries Phosphothreonine. Ser732 carries the post-translational modification Phosphoserine.

Belongs to the protein kinase superfamily. AGC Ser/Thr protein kinase family. S6 kinase subfamily. In terms of assembly, forms a complex with either MAPK1/ERK2 or MAPK3/ERK1 in quiescent cells. Transiently dissociates following mitogenic stimulation. Interacts with ETV1/ER81 and FGFR1. As to quaternary structure, (Microbial infection) Interacts with Kaposi's sarcoma-associated herpesvirus/HHV-8 protein ORF45; this interaction allows RPS6KA1 activation. Requires Mg(2+) as cofactor. Activated by phosphorylation at Ser-221 by PDPK1. Autophosphorylated on Ser-380, as part of the activation process. May be phosphorylated at Thr-359 and Ser-363 by MAPK1/ERK2 and MAPK3/ERK1. Post-translationally, N-terminal myristoylation results in an activated kinase in the absence of added growth factors.

The protein localises to the nucleus. It localises to the cytoplasm. The catalysed reaction is L-seryl-[protein] + ATP = O-phospho-L-seryl-[protein] + ADP + H(+). It carries out the reaction L-threonyl-[protein] + ATP = O-phospho-L-threonyl-[protein] + ADP + H(+). With respect to regulation, upon extracellular signal or mitogen stimulation, phosphorylated at Thr-573 in the C-terminal kinase domain (CTKD) by MAPK1/ERK2 and MAPK3/ERK1. The activated CTKD then autophosphorylates Ser-380, allowing binding of PDPK1, which in turn phosphorylates Ser-221 in the N-terminal kinase domain (NTDK) leading to the full activation of the protein and subsequent phosphorylation of the substrates by the NTKD. Serine/threonine-protein kinase that acts downstream of ERK (MAPK1/ERK2 and MAPK3/ERK1) signaling and mediates mitogenic and stress-induced activation of the transcription factors CREB1, ETV1/ER81 and NR4A1/NUR77, regulates translation through RPS6 and EIF4B phosphorylation, and mediates cellular proliferation, survival, and differentiation by modulating mTOR signaling and repressing pro-apoptotic function of BAD and DAPK1. In fibroblast, is required for EGF-stimulated phosphorylation of CREB1, which results in the subsequent transcriptional activation of several immediate-early genes. In response to mitogenic stimulation (EGF and PMA), phosphorylates and activates NR4A1/NUR77 and ETV1/ER81 transcription factors and the cofactor CREBBP. Upon insulin-derived signal, acts indirectly on the transcription regulation of several genes by phosphorylating GSK3B at 'Ser-9' and inhibiting its activity. Phosphorylates RPS6 in response to serum or EGF via an mTOR-independent mechanism and promotes translation initiation by facilitating assembly of the pre-initiation complex. In response to insulin, phosphorylates EIF4B, enhancing EIF4B affinity for the EIF3 complex and stimulating cap-dependent translation. Is involved in the mTOR nutrient-sensing pathway by directly phosphorylating TSC2 at 'Ser-1798', which potently inhibits TSC2 ability to suppress mTOR signaling, and mediates phosphorylation of RPTOR, which regulates mTORC1 activity and may promote rapamycin-sensitive signaling independently of the PI3K/AKT pathway. Also involved in feedback regulation of mTORC1 and mTORC2 by phosphorylating DEPTOR. Mediates cell survival by phosphorylating the pro-apoptotic proteins BAD and DAPK1 and suppressing their pro-apoptotic function. Promotes the survival of hepatic stellate cells by phosphorylating CEBPB in response to the hepatotoxin carbon tetrachloride (CCl4). Mediates induction of hepatocyte prolifration by TGFA through phosphorylation of CEBPB. Is involved in cell cycle regulation by phosphorylating the CDK inhibitor CDKN1B, which promotes CDKN1B association with 14-3-3 proteins and prevents its translocation to the nucleus and inhibition of G1 progression. Phosphorylates EPHA2 at 'Ser-897', the RPS6KA-EPHA2 signaling pathway controls cell migration. In response to mTORC1 activation, phosphorylates EIF4B at 'Ser-406' and 'Ser-422' which stimulates bicarbonate cotransporter SLC4A7 mRNA translation, increasing SLC4A7 protein abundance and function. Functionally, (Microbial infection) Promotes the late transcription and translation of viral lytic genes during Kaposi's sarcoma-associated herpesvirus/HHV-8 infection, when constitutively activated. This chain is Ribosomal protein S6 kinase alpha-1 (RPS6KA1), found in Homo sapiens (Human).